Consider the following 114-residue polypeptide: Pro-FMRFamide-related neuropeptide FF (114 aa).

An N-terminal signal peptide occupies residues 1–21 (MDSKWAAVLLLLLLLRNWGHA). Residues 22-69 (EEAGSWGEDQVFAEEDKGPHPSQYAHTPDRIQTPGSLMRVLLQAMERP) constitute a propeptide that is removed on maturation. A disordered region spans residues 29–51 (EDQVFAEEDKGPHPSQYAHTPDR). Phe82 is modified (phenylalanine amide). Positions 85–100 (NAWGPWSKEQLSPQAR) are excised as a propeptide. Phe111 is modified (phenylalanine amide).

The protein belongs to the FARP (FMRFamide related peptide) family.

The protein localises to the secreted. Its function is as follows. Morphine modulating peptides. Have wide-ranging physiologic effects, including the modulation of morphine-induced analgesia, elevation of arterial blood pressure, and increased somatostatin secretion from the pancreas. Neuropeptide FF and SF potentiate and sensitize ASIC2 and ASIC3 channels. In Rattus norvegicus (Rat), this protein is Pro-FMRFamide-related neuropeptide FF (Npff).